Here is a 691-residue protein sequence, read N- to C-terminus: DNA ligase (691 aa).

NAD(+) contacts are provided by residues D41–D45, S90–L91, and E130. The active-site N6-AMP-lysine intermediate is K132. R153, E190, K307, and K331 together coordinate NAD(+). Residues C425, C428, C443, and C449 each contribute to the Zn(2+) site. Residues A610–P691 enclose the BRCT domain.

Belongs to the NAD-dependent DNA ligase family. LigA subfamily. It depends on Mg(2+) as a cofactor. The cofactor is Mn(2+).

The catalysed reaction is NAD(+) + (deoxyribonucleotide)n-3'-hydroxyl + 5'-phospho-(deoxyribonucleotide)m = (deoxyribonucleotide)n+m + AMP + beta-nicotinamide D-nucleotide.. Its function is as follows. DNA ligase that catalyzes the formation of phosphodiester linkages between 5'-phosphoryl and 3'-hydroxyl groups in double-stranded DNA using NAD as a coenzyme and as the energy source for the reaction. It is essential for DNA replication and repair of damaged DNA. The chain is DNA ligase from Burkholderia lata (strain ATCC 17760 / DSM 23089 / LMG 22485 / NCIMB 9086 / R18194 / 383).